Reading from the N-terminus, the 204-residue chain is Inactive ribonuclease-like protein 9 (204 aa).

The first 26 residues, 1–26 (MMRTLITIHPLPLLLLLQQLLQPVQF), serve as a signal peptide directing secretion. 3 disulfides stabilise this stretch: Cys-97–Cys-152, Cys-115–Cys-167, and Cys-122–Cys-129. N-linked (GlcNAc...) asparagine glycans are attached at residues Asn-130 and Asn-142.

Belongs to the pancreatic ribonuclease family.

Its subcellular location is the secreted. Functionally, does not exhibit any ribonuclease activity. In Pongo pygmaeus (Bornean orangutan), this protein is Inactive ribonuclease-like protein 9 (RNASE9).